The sequence spans 294 residues: Endonuclease 3 (294 aa).

An N-terminal signal peptide occupies residues 1–24 (MGWSLRMWIVSILVLTQLVNGALC). Residues Trp-25 and His-30 each contribute to the a divalent metal cation site. Residue 25-30 (WGDAGH) participates in substrate binding. Cys-34 and Cys-65 are oxidised to a cystine. 2 residues coordinate a divalent metal cation: Asp-69 and His-84. Substrate-binding positions include 69-75 (DEIKKLP), 84-87 (HFAD), and 94-99 (NYEYSR). Cystine bridges form between Cys-93–Cys-241, Cys-101–Cys-106, and Cys-221–Cys-228. Substrate is bound by residues Asn-113 and Tyr-131. N-linked (GlcNAc...) asparagine glycosylation occurs at Asn-113. N-linked (GlcNAc...) asparagine glycosylation occurs at Asn-132. A divalent metal cation contacts are provided by His-142, Asp-146, His-152, His-176, and Asp-180. The segment at 142–191 (HYMGDIHQPLHEGFIGDLGGNKIKVHWYNQETNLHRVWDDMIIESALETY) is substrate binding. N-linked (GlcNAc...) asparagine glycans are attached at residues Asn-193, Asn-224, and Asn-247. A propeptide spans 279 to 294 (GTLNRIFSAKRKLARA) (removed in mature form).

The protein belongs to the nuclease type I family. In terms of assembly, monomer. Zn(2+) serves as cofactor. Requires Mn(2+) as cofactor.

It catalyses the reaction Endonucleolytic cleavage to 5'-phosphomononucleotide and 5'-phosphooligonucleotide end-products.. Functionally, endonuclease that can use RNA and single-stranded DNA as substrates. In contradiction with PubMed:23620482, cannot hydrolyze single-stranded DNA and does not cleave mismatches. This chain is Endonuclease 3, found in Arabidopsis thaliana (Mouse-ear cress).